Consider the following 158-residue polypeptide: Cyclic pyranopterin monophosphate synthase (158 aa).

Substrate contacts are provided by residues 76–78 (LCH) and 114–115 (ME). Asp-129 is a catalytic residue.

It belongs to the MoaC family. As to quaternary structure, homohexamer; trimer of dimers.

The enzyme catalyses (8S)-3',8-cyclo-7,8-dihydroguanosine 5'-triphosphate = cyclic pyranopterin phosphate + diphosphate. It participates in cofactor biosynthesis; molybdopterin biosynthesis. Functionally, catalyzes the conversion of (8S)-3',8-cyclo-7,8-dihydroguanosine 5'-triphosphate to cyclic pyranopterin monophosphate (cPMP). The chain is Cyclic pyranopterin monophosphate synthase from Shewanella baltica (strain OS223).